Here is a 658-residue protein sequence, read N- to C-terminus: Glycogen debranching enzyme (658 aa).

Aspartate 335 (nucleophile) is an active-site residue. Glutamate 370 functions as the Proton donor in the catalytic mechanism. Residues asparagine 457–threonine 468 show a composition bias toward basic and acidic residues. Positions asparagine 457–leucine 481 are disordered.

Belongs to the glycosyl hydrolase 13 family.

The catalysed reaction is Hydrolysis of (1-&gt;6)-alpha-D-glucosidic linkages to branches with degrees of polymerization of three or four glucose residues in limit dextrin.. It participates in glycan degradation; glycogen degradation. Functionally, removes maltotriose and maltotetraose chains that are attached by 1,6-alpha-linkage to the limit dextrin main chain, generating a debranched limit dextrin. The polypeptide is Glycogen debranching enzyme (Pectobacterium atrosepticum (strain SCRI 1043 / ATCC BAA-672) (Erwinia carotovora subsp. atroseptica)).